A 118-amino-acid chain; its full sequence is Evasin P546 (118 aa).

The signal sequence occupies residues 1-21; the sequence is MKVLLYIAASCLMLLALNVSA. 4 cysteine pairs are disulfide-bonded: Cys38-Cys59, Cys55-Cys96, Cys72-Cys101, and Cys91-Cys110. A glycan (N-linked (GlcNAc...) asparagine) is linked at Asn45.

Its subcellular location is the secreted. In terms of biological role, salivary chemokine-binding protein which binds to host chemokines CCL1, CCL3, CCL5 and CCL22. The protein is Evasin P546 of Amblyomma cajennense (Cayenne tick).